The chain runs to 778 residues: Actin-binding LIM protein 1 (778 aa).

LIM zinc-binding domains lie at 97-156 (IHCH…MYGT), 156-216 (TRCH…MSSS), 224-283 (SNCA…LFGV), and 283-343 (VKCE…TKTE). Serine 216 bears the Phosphoserine mark. Positions 339–370 (STKTEEKLRPTRTSSESIYSRPGSSIPGSPGH) are disordered. Residues 360-369 (PGSSIPGSPG) are compositionally biased toward low complexity. Serine 367 is modified (phosphoserine). Phosphotyrosine occurs at positions 373 and 396. 2 disordered regions span residues 414–510 (YDDK…QAPK) and 552–597 (AAQA…EELL). 3 positions are modified to phosphoserine: serine 422, serine 426, and serine 431. Polar residues predominate over residues 423 to 434 (LGESPRTLSPTP). A Phosphothreonine modification is found at threonine 433. At serine 435 the chain carries Phosphoserine. Position 439 is a phosphotyrosine (tyrosine 439). Polar residues predominate over residues 449-474 (RSTSQGSINSPVYSRHSYTPTTSRSP). Residues serine 452, serine 455, serine 458, serine 498, and serine 587 each carry the phosphoserine modification. Residues 590–614 (EEDDEELLRRRQLQEEQLMKLNSGL) adopt a coiled-coil conformation. A Glycyl lysine isopeptide (Lys-Gly) (interchain with G-Cter in SUMO2) cross-link involves residue lysine 620. Serine 640, serine 655, serine 677, and serine 706 each carry phosphoserine. One can recognise an HP domain in the interval 710 to 778 (MLEPKIFPYE…NDMKKKAKLF (69 aa)).

In terms of assembly, binds F-actin. Interacts with ABRA. Detected in liver, heart, skeletal muscle, brain and retina, where it is concentrated in the inner segment and in the outer plexiform layers.

The protein localises to the cytoplasm. It is found in the cytoskeleton. May act as scaffold protein. May play a role in the development of the retina. Has been suggested to play a role in axon guidance. The polypeptide is Actin-binding LIM protein 1 (ABLIM1) (Homo sapiens (Human)).